Here is a 101-residue protein sequence, read N- to C-terminus: Small ribosomal subunit protein uS14 (101 aa).

It belongs to the universal ribosomal protein uS14 family. As to quaternary structure, part of the 30S ribosomal subunit. Contacts proteins S3 and S10.

In terms of biological role, binds 16S rRNA, required for the assembly of 30S particles and may also be responsible for determining the conformation of the 16S rRNA at the A site. The protein is Small ribosomal subunit protein uS14 of Baumannia cicadellinicola subsp. Homalodisca coagulata.